The primary structure comprises 815 residues: MPTVISASVAPRTAAEPRSPGPVPHPAQSKATEAGGGNASGIYSAIISRNFPIIGVKEKTFEQLHKKCLEKKVLYVDPEFPPDETSLFYSQKFPIQFIWKRPPEICENPRFIIDGANRTDICQGDLGDCWFLAAIACLTLNQRLLFRVIPHDQSFIENYAGIFHFQFWRYGEWVDVVIDDCLPTYNNQLVFTKSNHRNEFWSALLEKAYAKLHGSYEALKGGNTTEAMEDFTGGVTEFFEIRDAPSDMHKIMKKAIERGSLMGCSIDDGTNMTYGTSPSGLNMGELIARMVRNMDNSLFRDSDLDPRASVERPTRTIVPVQYETRMACGLVRGHAYSVTGLDEVLFKGEKVKLVRLRNPWGQVEWNGSWSDGWKDWSFVDKDEKARLQHQVTEDGEFWMSYEDFIYHFTKLEICNLTADALQSDKLQTWTVSVNEGRWVRGCSAGGCRNFPDTFWTNPQYRLKLLEEDDDPDDSEVICSFLVALMQKNRRKDRKLGANLFTIGFAIYEVPKEMHGNRQHLQKDFFLYNASRARSKTYINMREVSQRFRLPPSEYVIVPSTYEPHQEGEFILRVFSEKRNLSEEVENTISVDRPVPIIFVSDRANSNKELGVDQESEEGKGKTSPDKQEQSPQPQPGSSDQESEEQQQFRNIFKQIAGDDMEICADELKKVLNTVVNKHKDLKTHGFTLESCRSMIALMDTDGSGKLNLQEFHHLWNKIKAWQKIFKHYDTDQSGTINSYEMRNAVNDAGFHLNNQLYDIITMRYADKHMNIDFDSFICCFVRLEGMFRAFHAFDKDGDGIIKLNVLEWLQLTMYA.

Positions 7–36 (ASVAPRTAAEPRSPGPVPHPAQSKATEAGG) are disordered. The Calpain catalytic domain maps to 74-417 (LYVDPEFPPD…FTKLEICNLT (344 aa)). Catalysis depends on residues cysteine 129, histidine 334, and asparagine 358. The segment at 418–586 (ADALQSDKLQ…KRNLSEEVEN (169 aa)) is domain III. A linker region spans residues 587 to 649 (TISVDRPVPI…QESEEQQQFR (63 aa)). The disordered stretch occupies residues 605-646 (SNKELGVDQESEEGKGKTSPDKQEQSPQPQPGSSDQESEEQQ). The segment covering 616-628 (EEGKGKTSPDKQE) has biased composition (basic and acidic residues). Residues 629-639 (QSPQPQPGSSD) show a composition bias toward low complexity. EF-hand domains lie at 643 to 677 (EEQQ…VVNK), 686 to 719 (FTLE…NKIK), 716 to 751 (NKIK…AGFH), and 781 to 815 (VRLE…TMYA). A domain IV region spans residues 650–815 (NIFKQIAGDD…LEWLQLTMYA (166 aa)). Ca(2+)-binding residues include alanine 656, aspartate 659, glutamate 661, glutamate 666, aspartate 699, aspartate 701, serine 703, lysine 705, glutamate 710, aspartate 729, aspartate 731, serine 733, threonine 735, glutamate 740, aspartate 794, aspartate 796, aspartate 798, and isoleucine 800.

This sequence belongs to the peptidase C2 family. As to quaternary structure, homodimer; via EF-hand domain 4. Interacts with TTN/titin. Interacts with CMYA5; this interaction, which results in CMYA5 proteolysis, may protect CAPN3 from autolysis. Interacts with SIMC1. Interacts with UTP25; the interaction is required for CAPN3 translocation to the nucleolus.

It localises to the cytoplasm. It is found in the nucleus. The protein resides in the nucleolus. It carries out the reaction Broad endopeptidase activity.. Activated by micromolar concentrations of calcium and inhibited by calpastatin. In terms of biological role, calcium-regulated non-lysosomal thiol-protease. Proteolytically cleaves CTBP1. Mediates, with UTP25, the proteasome-independent degradation of p53/TP53. In Macaca fascicularis (Crab-eating macaque), this protein is Calpain-3 (CAPN3).